The chain runs to 659 residues: Acetyl-coenzyme A synthetase (659 aa).

The tract at residues Met-1–His-35 is disordered. CoA contacts are provided by residues Arg-205 to Ser-208, Thr-323, and Asn-347. ATP-binding positions include Gly-399–Pro-401, Asp-423–Thr-428, Asp-512, and Arg-527. Ser-535 contacts CoA. Position 538 (Arg-538) interacts with ATP. Positions 549, 551, and 554 each coordinate Mg(2+). The residue at position 621 (Lys-621) is an N6-acetyllysine.

This sequence belongs to the ATP-dependent AMP-binding enzyme family. It depends on Mg(2+) as a cofactor. Post-translationally, acetylated. Deacetylation by the SIR2-homolog deacetylase activates the enzyme.

The enzyme catalyses acetate + ATP + CoA = acetyl-CoA + AMP + diphosphate. Functionally, catalyzes the conversion of acetate into acetyl-CoA (AcCoA), an essential intermediate at the junction of anabolic and catabolic pathways. AcsA undergoes a two-step reaction. In the first half reaction, AcsA combines acetate with ATP to form acetyl-adenylate (AcAMP) intermediate. In the second half reaction, it can then transfer the acetyl group from AcAMP to the sulfhydryl group of CoA, forming the product AcCoA. The polypeptide is Acetyl-coenzyme A synthetase (Chlorobaculum tepidum (strain ATCC 49652 / DSM 12025 / NBRC 103806 / TLS) (Chlorobium tepidum)).